The primary structure comprises 119 residues: Fluoride-specific ion channel FluC 2 (119 aa).

2 consecutive transmembrane segments (helical) span residues 1–21 (MIFA…ALTS) and 44–64 (GAFF…YAFL). The Na(+) site is built by Gly70 and Thr73. Residues 98-118 (LLASYLGGAVLLTCGYYLGSL) traverse the membrane as a helical segment.

The protein belongs to the fluoride channel Fluc/FEX (TC 1.A.43) family.

The protein resides in the cell membrane. The catalysed reaction is fluoride(in) = fluoride(out). With respect to regulation, na(+) is not transported, but it plays an essential structural role and its presence is essential for fluoride channel function. Its function is as follows. Fluoride-specific ion channel. Important for reducing fluoride concentration in the cell, thus reducing its toxicity. The polypeptide is Fluoride-specific ion channel FluC 2 (Lactobacillus delbrueckii subsp. bulgaricus (strain ATCC 11842 / DSM 20081 / BCRC 10696 / JCM 1002 / NBRC 13953 / NCIMB 11778 / NCTC 12712 / WDCM 00102 / Lb 14)).